We begin with the raw amino-acid sequence, 208 residues long: MTGKKRSASSSRWLQEHFSDKYVQQAQKKGLRSRAWFKLDEIQQSDKLFKPGMTVVDLGAAPGGWSQYVVTQIGGRGRIIACDLLPMDPIVGVDFLQGDFRDELVMKALLERVGDSKVQVVMSDMAPNMSGTPAVDIPRAMYLVELALEMCRDVLAPGGSFVVKVFQGEGFDEYLREIRSLFTKVKVRKPDSSRARSREVYIVATGRK.

Residues Gly63, Trp65, Asp83, Asp99, and Asp124 each contribute to the S-adenosyl-L-methionine site. The active-site Proton acceptor is Lys164.

Belongs to the class I-like SAM-binding methyltransferase superfamily. RNA methyltransferase RlmE family.

It localises to the cytoplasm. The catalysed reaction is uridine(2552) in 23S rRNA + S-adenosyl-L-methionine = 2'-O-methyluridine(2552) in 23S rRNA + S-adenosyl-L-homocysteine + H(+). Its function is as follows. Specifically methylates the uridine in position 2552 of 23S rRNA at the 2'-O position of the ribose in the fully assembled 50S ribosomal subunit. The sequence is that of Ribosomal RNA large subunit methyltransferase E from Salmonella arizonae (strain ATCC BAA-731 / CDC346-86 / RSK2980).